Here is a 202-residue protein sequence, read N- to C-terminus: LexA repressor (202 aa).

The H-T-H motif DNA-binding region spans 29–49; sequence VREICEATGLKSTSTVHGHLT. Active-site for autocatalytic cleavage activity residues include S126 and K163.

This sequence belongs to the peptidase S24 family. Homodimer.

The enzyme catalyses Hydrolysis of Ala-|-Gly bond in repressor LexA.. In terms of biological role, represses a number of genes involved in the response to DNA damage (SOS response), including recA and lexA. In the presence of single-stranded DNA, RecA interacts with LexA causing an autocatalytic cleavage which disrupts the DNA-binding part of LexA, leading to derepression of the SOS regulon and eventually DNA repair. In Caldicellulosiruptor saccharolyticus (strain ATCC 43494 / DSM 8903 / Tp8T 6331), this protein is LexA repressor.